Consider the following 358-residue polypeptide: 3-dehydroquinate synthase (358 aa).

NAD(+)-binding positions include 70 to 75, 104 to 108, 128 to 129, K141, and K150; these read DGEAHK, GVIGD, and TT. 3 residues coordinate Zn(2+): E183, H246, and H263.

The protein belongs to the sugar phosphate cyclases superfamily. Dehydroquinate synthase family. The cofactor is NAD(+). Co(2+) is required as a cofactor. It depends on Zn(2+) as a cofactor.

It localises to the cytoplasm. The catalysed reaction is 7-phospho-2-dehydro-3-deoxy-D-arabino-heptonate = 3-dehydroquinate + phosphate. The protein operates within metabolic intermediate biosynthesis; chorismate biosynthesis; chorismate from D-erythrose 4-phosphate and phosphoenolpyruvate: step 2/7. Catalyzes the conversion of 3-deoxy-D-arabino-heptulosonate 7-phosphate (DAHP) to dehydroquinate (DHQ). The polypeptide is 3-dehydroquinate synthase (Bordetella bronchiseptica (strain ATCC BAA-588 / NCTC 13252 / RB50) (Alcaligenes bronchisepticus)).